Consider the following 357-residue polypeptide: Ubiquitin carboxyl-terminal hydrolase 2 (357 aa).

The USP domain maps to 19–351 (TGLRNLGNTC…DAYLLFYELA (333 aa)). Cys-28 serves as the catalytic Nucleophile. Zn(2+)-binding residues include Cys-177, Cys-180, Cys-228, and Cys-231. The active-site Proton acceptor is His-309.

This sequence belongs to the peptidase C19 family. USP2 subfamily. In terms of assembly, homooligomer.

Its subcellular location is the cytoplasm. The protein localises to the perinuclear region. It catalyses the reaction Thiol-dependent hydrolysis of ester, thioester, amide, peptide and isopeptide bonds formed by the C-terminal Gly of ubiquitin (a 76-residue protein attached to proteins as an intracellular targeting signal).. In terms of biological role, hydrolase that deubiquitinates polyubiquitinated target proteins such as MDM2, MDM4 and CCND1. Possesses both ubiquitin-specific peptidase and isopeptidase activities. May play a role in the regulation of the circadian clock. The protein is Ubiquitin carboxyl-terminal hydrolase 2 (USP2) of Gallus gallus (Chicken).